The primary structure comprises 436 residues: MSSNKKLFIQTLGCQMNDTDSQHIQAELEKHKGYVTTQNIEDADLIIINTCSVRERPVQKLFSEIGQFNKKKKEGAKIGVCGCTASHLGQDIIKRAPYVDFVVGARNISKIKDVVDVKGAVEVSIDNDESTYEFSTAKTNKYRASVNISVGCDKKCTYCIVPSTRGEEISIPPEMIVEQVRKSVEQGAVEVMLLGQNVNSYGRKFSDKREKYTFTKLLQDVSKIDGLERIRFTSPHPLHMDDEFIEEFAKNPKISKCIHMPLQSGSTSVLKAMKRGYSKEWFLNRASKMRELVPNLRITTDIIVAFPGETQEDFLDTLDVVEQVKFDQIFNFKYSPRPGTEALNLKDKELPDEIGSQRLIDLIELHKRYLEESMPKLIGETLNILVESLKPNGEVCGYTDNYLQVFAKGSDELLGKFVNVKITDVTRTSLKGEVVN.

In terms of domain architecture, MTTase N-terminal spans 5–120 (KKLFIQTLGC…IKDVVDVKGA (116 aa)). Residues C14, C51, C83, C152, C156, and C159 each contribute to the [4Fe-4S] cluster site. Positions 138–372 (KTNKYRASVN…IELHKRYLEE (235 aa)) constitute a Radical SAM core domain. The region spanning 375-436 (PKLIGETLNI…RTSLKGEVVN (62 aa)) is the TRAM domain.

The protein belongs to the methylthiotransferase family. MiaB subfamily. In terms of assembly, monomer. The cofactor is [4Fe-4S] cluster.

Its subcellular location is the cytoplasm. It catalyses the reaction N(6)-dimethylallyladenosine(37) in tRNA + (sulfur carrier)-SH + AH2 + 2 S-adenosyl-L-methionine = 2-methylsulfanyl-N(6)-dimethylallyladenosine(37) in tRNA + (sulfur carrier)-H + 5'-deoxyadenosine + L-methionine + A + S-adenosyl-L-homocysteine + 2 H(+). Functionally, catalyzes the methylthiolation of N6-(dimethylallyl)adenosine (i(6)A), leading to the formation of 2-methylthio-N6-(dimethylallyl)adenosine (ms(2)i(6)A) at position 37 in tRNAs that read codons beginning with uridine. This is tRNA-2-methylthio-N(6)-dimethylallyladenosine synthase from Aliarcobacter butzleri (strain RM4018) (Arcobacter butzleri).